Reading from the N-terminus, the 167-residue chain is Transcriptional regulator MraZ (167 aa).

SpoVT-AbrB domains are found at residues 8-51 (ESNH…YGDH) and 92-135 (SFPT…NPAT).

Belongs to the MraZ family. As to quaternary structure, forms oligomers.

The protein localises to the cytoplasm. It localises to the nucleoid. The sequence is that of Transcriptional regulator MraZ from Ruegeria pomeroyi (strain ATCC 700808 / DSM 15171 / DSS-3) (Silicibacter pomeroyi).